Reading from the N-terminus, the 201-residue chain is Small ribosomal subunit protein uS10m (201 aa).

This sequence belongs to the universal ribosomal protein uS10 family. In terms of assembly, component of the mitochondrial small ribosomal subunit (mt-SSU). Mature mammalian 55S mitochondrial ribosomes consist of a small (28S) and a large (39S) subunit. The 28S small subunit contains a 12S ribosomal RNA (12S mt-rRNA) and 30 different proteins. The 39S large subunit contains a 16S rRNA (16S mt-rRNA), a copy of mitochondrial valine transfer RNA (mt-tRNA(Val)), which plays an integral structural role, and 52 different proteins.

It localises to the mitochondrion. The sequence is that of Small ribosomal subunit protein uS10m (MRPS10) from Homo sapiens (Human).